We begin with the raw amino-acid sequence, 141 residues long: Large ribosomal subunit protein uL11 (141 aa).

The protein belongs to the universal ribosomal protein uL11 family. Part of the ribosomal stalk of the 50S ribosomal subunit. Interacts with L10 and the large rRNA to form the base of the stalk. L10 forms an elongated spine to which L12 dimers bind in a sequential fashion forming a multimeric L10(L12)X complex. Post-translationally, one or more lysine residues are methylated.

In terms of biological role, forms part of the ribosomal stalk which helps the ribosome interact with GTP-bound translation factors. In Prochlorococcus marinus (strain MIT 9211), this protein is Large ribosomal subunit protein uL11.